Here is a 418-residue protein sequence, read N- to C-terminus: AP-3 complex subunit mu-1 (418 aa).

An MHD domain is found at 176–417 (NNEAYFDVVE…VTKAGKFQVR (242 aa)).

The protein belongs to the adaptor complexes medium subunit family. As to quaternary structure, adaptor protein complex 3 (AP-3) is a heterotetramer composed of two large adaptins (delta-type subunit AP3D1 and beta-type subunit AP3B1 or AP3B2), a medium adaptin (mu-type subunit AP3M1 or AP3M2) and a small adaptin (sigma-type subunit APS1 or AP3S2). Interacts with AGAP1. AP-3 associates with the BLOC-1 complex. In terms of assembly, (Microbial infection) Interacts with human respiratory virus (HRSV) matrix protein; this interaction plays an essential role in trafficking the matrix protein in host cells.

The protein resides in the golgi apparatus. It localises to the cytoplasmic vesicle membrane. Its function is as follows. Part of the AP-3 complex, an adaptor-related complex which is not clathrin-associated. The complex is associated with the Golgi region as well as more peripheral structures. It facilitates the budding of vesicles from the Golgi membrane and may be directly involved in trafficking to lysosomes. In concert with the BLOC-1 complex, AP-3 is required to target cargos into vesicles assembled at cell bodies for delivery into neurites and nerve terminals. This chain is AP-3 complex subunit mu-1 (AP3M1), found in Homo sapiens (Human).